The chain runs to 423 residues: MIRFCPSCFALKRTAPVLNHTSRLGNYFNNTFSKFSVNRMSVSSYSSDASSTVMDESPPNGVTKSVSGKGPTAVVMMNMGGPSNLDEVGPFLERLFTDGDIIPLGYFQNSLGKFIAKRRTPKVQNHYSDIGGGSPILHWTRIQGSEMCKILDKKCPESAPHLPFVAFRYAPPLTEDMLDELKKANVSRAVAFSQYPQWSCATSGASLNELRRKLIEKGMEKDFEWSIVDRWPLQQGLINAFAENIEETLKTYPEDVRDDVVIVFSAHSLPMSQVAKGDPYVYEIAATSQAVMKRLNYKNKFVNAWQSKVGPLPWMSPATDFVIEQLGNRGQKNMILVPIAFTSDHIETLKELEDYIEDAKQKGITGVKRVSSINGSMTAIQGMADLVAEHLKAKVPYSRQFTQRCPGCTSESCAERINFFQDF.

A mitochondrion-targeting transit peptide spans 1–40 (MIRFCPSCFALKRTAPVLNHTSRLGNYFNNTFSKFSVNRM). Cysteine 200 is a binding site for [2Fe-2S] cluster. The active site involves aspartate 385. Positions 405, 408, and 413 each coordinate [2Fe-2S] cluster.

This sequence belongs to the ferrochelatase family. In terms of assembly, monomer. It depends on [2Fe-2S] cluster as a cofactor.

It is found in the mitochondrion inner membrane. Its subcellular location is the cytoplasm. The protein resides in the nucleus. It carries out the reaction heme b + 2 H(+) = protoporphyrin IX + Fe(2+). It participates in porphyrin-containing compound metabolism; protoheme biosynthesis; protoheme from protoporphyrin-IX: step 1/1. In terms of biological role, catalyzes the ferrous insertion into protoporphyrin IX. In Schizosaccharomyces pombe (strain 972 / ATCC 24843) (Fission yeast), this protein is Ferrochelatase, mitochondrial (hem15).